Consider the following 403-residue polypeptide: Ribosomal RNA large subunit methyltransferase I (403 aa).

Residues 9-86 (YPRLVLSKGR…KAESIDIAFF (78 aa)) form the PUA domain.

The protein belongs to the methyltransferase superfamily. RlmI family.

It localises to the cytoplasm. It catalyses the reaction cytidine(1962) in 23S rRNA + S-adenosyl-L-methionine = 5-methylcytidine(1962) in 23S rRNA + S-adenosyl-L-homocysteine + H(+). In terms of biological role, specifically methylates the cytosine at position 1962 (m5C1962) of 23S rRNA. The protein is Ribosomal RNA large subunit methyltransferase I of Salmonella gallinarum (strain 287/91 / NCTC 13346).